The primary structure comprises 253 residues: U1 small nuclear ribonucleoprotein A (253 aa).

Positions 23–102 (VTIYINNLNE…KPMRIQYAKT (80 aa)) constitute an RRM 1 domain. The disordered stretch occupies residues 111–140 (DGTFVPRERRKRNDEKPEKKQKREQHHDVS). The RRM 2 domain occupies 179–253 (NILFVQNLPH…NQMLISYAKK (75 aa)).

Belongs to the RRM U1 A/B'' family. In terms of assembly, component of the spliceosome where it is associated with snRNP U1.

Its subcellular location is the nucleus. The protein localises to the nucleolus. Its function is as follows. Involved in nuclear pre-mRNA splicing. The sequence is that of U1 small nuclear ribonucleoprotein A from Oryza sativa subsp. indica (Rice).